The chain runs to 390 residues: Dual-specificity RNA methyltransferase RlmN (390 aa).

The active-site Proton acceptor is E110. Residues 116–355 enclose the Radical SAM core domain; that stretch reads EADRATLCVS…VIIRKTRGDD (240 aa). C123 and C360 are disulfide-bonded. Positions 130, 134, and 137 each coordinate [4Fe-4S] cluster. S-adenosyl-L-methionine contacts are provided by residues 184 to 185, S216, 238 to 240, and N317; these read GE and SLH. Catalysis depends on C360, which acts as the S-methylcysteine intermediate.

This sequence belongs to the radical SAM superfamily. RlmN family. [4Fe-4S] cluster serves as cofactor.

The protein localises to the cytoplasm. The enzyme catalyses adenosine(2503) in 23S rRNA + 2 reduced [2Fe-2S]-[ferredoxin] + 2 S-adenosyl-L-methionine = 2-methyladenosine(2503) in 23S rRNA + 5'-deoxyadenosine + L-methionine + 2 oxidized [2Fe-2S]-[ferredoxin] + S-adenosyl-L-homocysteine. It carries out the reaction adenosine(37) in tRNA + 2 reduced [2Fe-2S]-[ferredoxin] + 2 S-adenosyl-L-methionine = 2-methyladenosine(37) in tRNA + 5'-deoxyadenosine + L-methionine + 2 oxidized [2Fe-2S]-[ferredoxin] + S-adenosyl-L-homocysteine. Its function is as follows. Specifically methylates position 2 of adenine 2503 in 23S rRNA and position 2 of adenine 37 in tRNAs. m2A2503 modification seems to play a crucial role in the proofreading step occurring at the peptidyl transferase center and thus would serve to optimize ribosomal fidelity. The sequence is that of Dual-specificity RNA methyltransferase RlmN from Haemophilus influenzae (strain PittEE).